The following is a 362-amino-acid chain: Aminomethyltransferase (362 aa).

This sequence belongs to the GcvT family. In terms of assembly, the glycine cleavage system is composed of four proteins: P, T, L and H.

The enzyme catalyses N(6)-[(R)-S(8)-aminomethyldihydrolipoyl]-L-lysyl-[protein] + (6S)-5,6,7,8-tetrahydrofolate = N(6)-[(R)-dihydrolipoyl]-L-lysyl-[protein] + (6R)-5,10-methylene-5,6,7,8-tetrahydrofolate + NH4(+). Its function is as follows. The glycine cleavage system catalyzes the degradation of glycine. In Bacillus subtilis (strain 168), this protein is Aminomethyltransferase.